The primary structure comprises 35 residues: Bacteriocin lactococcin-G subunit beta (35 aa).

Bacteriocin activity requires interaction of alpha and beta peptides in a molar ratio of 7:1 or 8:1 respectively.

Kills Lactococci. The protein is Bacteriocin lactococcin-G subunit beta of Lactococcus lactis subsp. lactis (Streptococcus lactis).